The following is a 92-amino-acid chain: UPF0223 protein SERP0684 (92 aa).

It belongs to the UPF0223 family.

In Staphylococcus epidermidis (strain ATCC 35984 / DSM 28319 / BCRC 17069 / CCUG 31568 / BM 3577 / RP62A), this protein is UPF0223 protein SERP0684.